The following is a 31-amino-acid chain: MSDINATRLPAWLATCPCAGDDVNPLLTRGE.

Positions 1-10 (MSDINATRLP) are excised as a propeptide. A cross-link (cyclopeptide (Ala-Pro)) is located at residues 11 to 17 (AWLATCP). Residues 12-16 (WLATC) constitute a cross-link (2'-cysteinyl-6'-hydroxytryptophan sulfoxide (Trp-Cys)). A propeptide spanning residues 18–31 (CAGDDVNPLLTRGE) is cleaved from the precursor.

It belongs to the MSDIN fungal toxin family. In terms of processing, processed by the macrocyclase-peptidase enzyme POPB to yield a toxic cyclic heptapeptide. POPB first removes 10 residues from the N-terminus. Conformational trapping of the remaining peptide forces the enzyme to release this intermediate rather than proceed to macrocyclization. The enzyme rebinds the remaining peptide in a different conformation and catalyzes macrocyclization of the N-terminal 7 residues.

In terms of biological role, major toxin that belongs to the bicyclic heptapeptides called phallotoxins. Although structurally related to amatoxins, phallotoxins have a different mode of action, which is the stabilization of F-actin. Phallotoxins are poisonous when administered parenterally, but not orally because of poor absorption. The polypeptide is Phalloidin proprotein (Amanita ocreata (Western North American destroying angel)).